A 467-amino-acid chain; its full sequence is Zinc finger and BTB domain-containing protein 43 (467 aa).

Met-1 carries the N-acetylmethionine modification. A BTB domain is found at 33–97 (CDVSIVVQGH…SYTGRLVMPA (65 aa)). Disordered stretches follow at residues 134–153 (LNHGSDHQSPSSSNYNGLVE) and 162–227 (HTDF…EFHY). Over residues 140–149 (HQSPSSSNYN) the composition is skewed to polar residues. Basic and acidic residues-rich tracts occupy residues 164–174 (DFPKAQELRDG) and 182–194 (KDELSSQVTEHEY). Residues Lys-182, Lys-247, Lys-297, and Lys-358 each participate in a glycyl lysine isopeptide (Lys-Gly) (interchain with G-Cter in SUMO2) cross-link. The C2H2-type 1; atypical zinc finger occupies 373 to 394 (YPCQCGKSFTHKSQRDRHMSMH). The C2H2-type 2 zinc-finger motif lies at 400 to 422 (YGCSVCGKKFKMKHHLVGHMKIH). The residue at position 423 (Thr-423) is a Phosphothreonine. The segment at 428 to 450 (YECNICAKRFMWRDSFHRHVTSC) adopts a C2H2-type 3; atypical zinc-finger fold. Lys-458 is covalently cross-linked (Glycyl lysine isopeptide (Lys-Gly) (interchain with G-Cter in SUMO2)).

Belongs to the krueppel C2H2-type zinc-finger protein family. Interacts with BDP1.

It is found in the nucleus. May be involved in transcriptional regulation. The sequence is that of Zinc finger and BTB domain-containing protein 43 (Zbtb43) from Mus musculus (Mouse).